A 609-amino-acid chain; its full sequence is Tyrosyl-DNA phosphodiesterase 1 (609 aa).

The segment covering 1–12 (MSQESSYGKWTI) has biased composition (polar residues). Residues 1–154 (MSQESSYGKW…EYETSGEGQD (154 aa)) are disordered. Phosphoserine is present on residues S61, S119, and S132. The segment covering 127–143 (KVEDRSPPDSHRAQRAD) has biased composition (basic and acidic residues). T148 carries the post-translational modification Phosphothreonine. S149 is modified (phosphoserine). H264 serves as the catalytic Nucleophile. K266 contacts substrate. Residues 401-404 (SIGS) form an interaction with DNA region. H494 (proton donor/acceptor) is an active-site residue. Substrate is bound at residue K496.

The protein belongs to the tyrosyl-DNA phosphodiesterase family. In terms of assembly, monomer.

The protein localises to the nucleus. Its subcellular location is the cytoplasm. DNA repair enzyme that can remove a variety of covalent adducts from DNA through hydrolysis of a 3'-phosphodiester bond, giving rise to DNA with a free 3' phosphate. Catalyzes the hydrolysis of dead-end complexes between DNA and the topoisomerase I active site tyrosine residue. Hydrolyzes 3'-phosphoglycolates on protruding 3' ends on DNA double-strand breaks due to DNA damage by radiation and free radicals. Acts on blunt-ended double-strand DNA breaks and on single-stranded DNA. Has low 3'exonuclease activity and can remove a single nucleoside from the 3'end of DNA and RNA molecules with 3'hydroxyl groups. Has no exonuclease activity towards DNA or RNA with a 3'phosphate. This is Tyrosyl-DNA phosphodiesterase 1 (Tdp1) from Rattus norvegicus (Rat).